The primary structure comprises 275 residues: NH(3)-dependent NAD(+) synthetase (275 aa).

50 to 57 lines the ATP pocket; that stretch reads GISGGVDS. Asp56 provides a ligand contact to Mg(2+). Arg147 is a deamido-NAD(+) binding site. Residue Thr167 coordinates ATP. Glu172 contacts Mg(2+). Deamido-NAD(+) is bound by residues Lys180 and Asp187. Positions 196 and 218 each coordinate ATP. 267 to 268 is a deamido-NAD(+) binding site; it reads HK.

It belongs to the NAD synthetase family. As to quaternary structure, homodimer.

It catalyses the reaction deamido-NAD(+) + NH4(+) + ATP = AMP + diphosphate + NAD(+) + H(+). Its pathway is cofactor biosynthesis; NAD(+) biosynthesis; NAD(+) from deamido-NAD(+) (ammonia route): step 1/1. Its function is as follows. Catalyzes the ATP-dependent amidation of deamido-NAD to form NAD. Uses ammonia as a nitrogen source. The polypeptide is NH(3)-dependent NAD(+) synthetase (Pseudomonas fluorescens (strain Pf0-1)).